Here is a 497-residue protein sequence, read N- to C-terminus: Probable malate:quinone oxidoreductase (497 aa).

The protein belongs to the MQO family. FAD is required as a cofactor.

It carries out the reaction (S)-malate + a quinone = a quinol + oxaloacetate. The protein operates within carbohydrate metabolism; tricarboxylic acid cycle; oxaloacetate from (S)-malate (quinone route): step 1/1. This Prochlorococcus marinus subsp. pastoris (strain CCMP1986 / NIES-2087 / MED4) protein is Probable malate:quinone oxidoreductase.